The chain runs to 346 residues: UDP-N-acetylenolpyruvoylglucosamine reductase (346 aa).

The region spanning Ile17–Glu187 is the FAD-binding PCMH-type domain. Residue Arg163 is part of the active site. Residue Ser233 is the Proton donor of the active site. Glu329 is a catalytic residue.

Belongs to the MurB family. FAD serves as cofactor.

Its subcellular location is the cytoplasm. The catalysed reaction is UDP-N-acetyl-alpha-D-muramate + NADP(+) = UDP-N-acetyl-3-O-(1-carboxyvinyl)-alpha-D-glucosamine + NADPH + H(+). Its pathway is cell wall biogenesis; peptidoglycan biosynthesis. Cell wall formation. This is UDP-N-acetylenolpyruvoylglucosamine reductase from Photobacterium profundum (strain SS9).